Consider the following 185-residue polypeptide: Guanosine deaminase (185 aa).

The CMP/dCMP-type deaminase domain maps to 28–142; that stretch reads DSDHKFLTQA…AAIAIGFDDF (115 aa). H80 is a binding site for Zn(2+). E82 serves as the catalytic Proton donor. Residues C110 and C113 each coordinate Zn(2+).

This sequence belongs to the cytidine and deoxycytidylate deaminase family. Expressed in roots, leaves, flowers and siliques.

The protein resides in the cytoplasm. The protein localises to the nucleus. It catalyses the reaction guanosine + H2O + H(+) = xanthosine + NH4(+). In terms of biological role, catalyzes the hydrolytic deamination of guanosine, producing xanthosine and ammonia. Deaminates exclusively guanosine and 2'-deoxyguanosine but no other aminated purines, pyrimidines, or pterines. Deamination of guanosine by GSDA is the only source of xanthosine production in Arabidopsis. The chain is Guanosine deaminase from Arabidopsis thaliana (Mouse-ear cress).